A 389-amino-acid chain; its full sequence is Chaperone protein DnaJ (389 aa).

The 65-residue stretch at 6–70 (DYYEVLGLAK…QKKAAYDQYG (65 aa)) folds into the J domain. The segment at 142–224 (GVEKEIKYNR…CHGTGHEKKA (83 aa)) adopts a CR-type zinc-finger fold. The Zn(2+) site is built by Cys-155, Cys-158, Cys-172, Cys-175, Cys-198, Cys-201, Cys-212, and Cys-215. CXXCXGXG motif repeat units follow at residues 155 to 162 (CATCGGNG), 172 to 179 (CHKCHGSG), 198 to 205 (CDVCHGTG), and 212 to 219 (CPTCHGTG).

The protein belongs to the DnaJ family. Homodimer. Requires Zn(2+) as cofactor.

It is found in the cytoplasm. In terms of biological role, participates actively in the response to hyperosmotic and heat shock by preventing the aggregation of stress-denatured proteins and by disaggregating proteins, also in an autonomous, DnaK-independent fashion. Unfolded proteins bind initially to DnaJ; upon interaction with the DnaJ-bound protein, DnaK hydrolyzes its bound ATP, resulting in the formation of a stable complex. GrpE releases ADP from DnaK; ATP binding to DnaK triggers the release of the substrate protein, thus completing the reaction cycle. Several rounds of ATP-dependent interactions between DnaJ, DnaK and GrpE are required for fully efficient folding. Also involved, together with DnaK and GrpE, in the DNA replication of plasmids through activation of initiation proteins. The chain is Chaperone protein DnaJ from Enterococcus faecalis (strain ATCC 700802 / V583).